We begin with the raw amino-acid sequence, 304 residues long: Polyisoprenyl-teichoic acid--peptidoglycan teichoic acid transferase TagU (304 aa).

Residues 1-3 lie on the Cytoplasmic side of the membrane; the sequence is MKK. The chain crosses the membrane as a helical; Signal-anchor for type II membrane protein span at residues 4–24; it reads ALIAIGLILGTITVAIIGYGI. The Extracellular segment spans residues 25–304; it reads YLYSSIQNTA…GELKSHLELS (280 aa).

Belongs to the LytR/CpsA/Psr (LCP) family.

It is found in the cell membrane. The protein operates within cell wall biogenesis. Its function is as follows. May catalyze the final step in cell wall teichoic acid biosynthesis, the transfer of the anionic cell wall polymers (APs) from their lipid-linked precursor to the cell wall peptidoglycan (PG). The polypeptide is Polyisoprenyl-teichoic acid--peptidoglycan teichoic acid transferase TagU (Halalkalibacterium halodurans (strain ATCC BAA-125 / DSM 18197 / FERM 7344 / JCM 9153 / C-125) (Bacillus halodurans)).